Reading from the N-terminus, the 261-residue chain is MRFLILFLALSLGGIDAAPPVHSRIVGGFKCEKNSQPWHVAVYRYNEYICGGVLLDANWVLTAAHCYYEENKVSLGKNNLYEEEPSAQHRLVSKSFLHPGYNRSLHRNHIRHPEYDYSNDLMLLRLSKPADITDVVKPIALPTEEPKLGSTCLASGWGSTTPFKFQNAKDLQCVNLKLLPNEDCGKAHIEKVTDVMLCAGETDGGKDTCKGDSGGPLICDGVLQGITSWGFTPCGEPKKPGVYTKLIKFTSWIKDTMAKNL.

A signal peptide spans Met1–Ala18. Positions Pro19–Arg24 are cleaved as a propeptide — activation peptide. The Peptidase S1 domain maps to Ile25–Ala258. 5 cysteine pairs are disulfide-bonded: Cys31–Cys173, Cys50–Cys66, Cys152–Cys219, Cys184–Cys198, and Cys209–Cys234. His65 functions as the Charge relay system in the catalytic mechanism. N-linked (GlcNAc...) asparagine glycosylation occurs at Asn102. The Charge relay system role is filled by Asp120. Residue Ser213 is the Charge relay system of the active site.

The protein belongs to the peptidase S1 family. Kallikrein subfamily.

It catalyses the reaction Preferential cleavage of Arg-|-Xaa bonds in small molecule substrates. Highly selective action to release kallidin (lysyl-bradykinin) from kininogen involves hydrolysis of Met-|-Xaa or Leu-|-Xaa.. Glandular kallikreins cleave Met-Lys and Arg-Ser bonds in kininogen to release Lys-bradykinin. In Mus musculus (Mouse), this protein is Kallikrein 1-related peptidase b9 (Klk1b9).